Here is a 164-residue protein sequence, read N- to C-terminus: Transcription antitermination protein NusB (164 aa).

Belongs to the NusB family.

In terms of biological role, involved in transcription antitermination. Required for transcription of ribosomal RNA (rRNA) genes. Binds specifically to the boxA antiterminator sequence of the ribosomal RNA (rrn) operons. This is Transcription antitermination protein NusB from Desulfovibrio desulfuricans (strain ATCC 27774 / DSM 6949 / MB).